Here is a 283-residue protein sequence, read N- to C-terminus: Pantothenate synthetase (283 aa).

30–37 (MGNLHQGH) contributes to the ATP binding site. His37 serves as the catalytic Proton donor. Gln61 contributes to the (R)-pantoate binding site. Gln61 lines the beta-alanine pocket. 149–152 (GEKD) contributes to the ATP binding site. Gln155 serves as a coordination point for (R)-pantoate. Residues Val178 and 186–189 (FSSR) contribute to the ATP site.

The protein belongs to the pantothenate synthetase family. In terms of assembly, homodimer.

The protein resides in the cytoplasm. The enzyme catalyses (R)-pantoate + beta-alanine + ATP = (R)-pantothenate + AMP + diphosphate + H(+). Its pathway is cofactor biosynthesis; (R)-pantothenate biosynthesis; (R)-pantothenate from (R)-pantoate and beta-alanine: step 1/1. In terms of biological role, catalyzes the condensation of pantoate with beta-alanine in an ATP-dependent reaction via a pantoyl-adenylate intermediate. The polypeptide is Pantothenate synthetase (Proteus mirabilis (strain HI4320)).